The chain runs to 960 residues: Dynamin-like GTPase OPA1, mitochondrial (960 aa).

The N-terminal 87 residues, 1-87, are a transit peptide targeting the mitochondrion; sequence MWRAGRAAVA…IKYGYQPRRN (87 aa). At 88–96 the chain is on the mitochondrial matrix side; sequence FWPARLAAR. The helical transmembrane segment at 97–113 threads the bilayer; sequence LLKLRYIILGSAVGGGY. Residues 114-770 lie on the Mitochondrial intermembrane side of the membrane; that stretch reads TAKKTFDEWK…NAIENMIGPD (657 aa). Residues 210–254 adopt a coiled-coil conformation; the sequence is SDKEKIDQLQEELLHTQLKYQRILERLEKENKELRKLVLQKDDKG. Residues 217-222 carry the LQQQIQ motif motif; sequence QLQEEL. The residue at position 228 (Lys-228) is an N6-acetyllysine. One can recognise a Dynamin-type G domain in the interval 285–561; that stretch reads QDHLPRVVVV…FWKMVRESVE (277 aa). Residues 295–302 form a G1 motif region; the sequence is GDQSAGKT. Residues Ser-298, Gly-300, Lys-301, Thr-302, Ser-303, and Gly-317 each coordinate GTP. Residue Thr-302 participates in Mg(2+) binding. A G2 motif region spans residues 321-324; the sequence is MMTR. Thr-323 and Asp-398 together coordinate Mg(2+). Residues 398–401 form a G3 motif region; that stretch reads DLPG. Residues 467 to 470 form a G4 motif region; the sequence is TKVD. 3 residues coordinate GTP: Lys-468, Asp-470, and Thr-503. The tract at residues 501-504 is G5 motif; it reads VVTG. Stalk region regions lie at residues 589 to 836 and 874 to 928; these read DRNE…IKDT and CNDV…VKLL. Residues 736–856 are paddle region; that stretch reads SDKQQWDAAI…KTALNHCNLC (121 aa). An intramembrane segment occupies 771-781; that stretch reads WKKRWMYWKNR. The Mitochondrial intermembrane segment spans residues 782-960; it reads TQEQCVHNET…AFIEALHQEK (179 aa). A disulfide bond links Cys-856 and Cys-874. Residues 895 to 960 are a coiled coil; that stretch reads RQQLTNTEVR…AFIEALHQEK (66 aa).

The protein belongs to the TRAFAC class dynamin-like GTPase superfamily. Dynamin/Fzo/YdjA family. Oligomeric complex consisting of membrane-bound and soluble forms of OPA1. Interacts with RCC1L; RCC1L acts as a guanine nucleotide exchange factor (GEF) for OPA1 by exchanging bound GDP for free GTP. Interacts with CHCHD3 and IMMT; these interactions occur preferentially with soluble OPA1 forms. Interacts with PRELID1. Cleaved by OMA1 or YME1L downstream of the transmembrane region in response to different signals to generate soluble forms. Cleaved by OMA1 at position S1 following stress conditions, generating the short soluble form (Dynamin-like GTPase OPA1, short form; S-OPA1). AFG3L2 is involved in the regulation of OMA1-dependent processing of OPA1. PARL-dependent proteolytic processing releases an antiapoptotic soluble form not required for mitochondrial fusion. In terms of processing, cleavage at position S2 by YME1L is required to mediate oxidative phosphorylation (OXPHOS)-induced mitochondrial fusion. Cleavage occurs in the sequence motif Leu-Gln-Gln-Gln-Ile-Gln (LQQQIQ). Post-translationally, cleavage at position S3 by YME1L is required for membrane tubulation. As to expression, detected in brain (at protein level). Detected in brain, brain stem, heart, kidney, liver and skeletal muscle.

The protein resides in the mitochondrion inner membrane. Its subcellular location is the mitochondrion intermembrane space. The enzyme catalyses GTP + H2O = GDP + phosphate + H(+). Activated by guanine nucleotide exchange factor RCC1L. In terms of biological role, dynamin-related GTPase that is essential for normal mitochondrial morphology by mediating fusion of the mitochondrial inner membranes, regulating cristae morphology and maintaining respiratory chain function. Exists in two forms: the transmembrane, long form (Dynamin-like GTPase OPA1, long form; L-OPA1), which is tethered to the inner mitochondrial membrane, and the short soluble form (Dynamin-like GTPase OPA1, short form; S-OPA1), which results from proteolytic cleavage and localizes in the intermembrane space. Both forms (L-OPA1 and S-OPA1) cooperate to catalyze the fusion of the mitochondrial inner membrane. The equilibrium between L-OPA1 and S-OPA1 is essential: excess levels of S-OPA1, produced by cleavage by OMA1 following loss of mitochondrial membrane potential, lead to an impaired equilibrium between L-OPA1 and S-OPA1, inhibiting mitochondrial fusion. The balance between L-OPA1 and S-OPA1 also influences cristae shape and morphology. Involved in remodeling cristae and the release of cytochrome c during apoptosis. Proteolytic processing by PARL in response to intrinsic apoptotic signals may lead to disassembly of OPA1 oligomers and release of the caspase activator cytochrome C (CYCS) into the mitochondrial intermembrane space. Acts as a regulator of T-helper Th17 cells, which are characterized by cells with fused mitochondria with tight cristae, by mediating mitochondrial membrane remodeling: OPA1 is required for interleukin-17 (IL-17) production. Its role in mitochondrial morphology is required for mitochondrial genome maintenance. Its function is as follows. Constitutes the transmembrane long form (L-OPA1) that plays a central role in mitochondrial inner membrane fusion and cristae morphology. L-OPA1 and the soluble short form (S-OPA1) form higher-order helical assemblies that coordinate the fusion of mitochondrial inner membranes. Inner membrane-anchored L-OPA1 molecules initiate membrane remodeling by recruiting soluble S-OPA1 to rapidly polymerize into a flexible cylindrical scaffold encaging the mitochondrial inner membrane. Once at the membrane surface, the formation of S-OPA1 helices induce bilayer curvature. OPA1 dimerization through the paddle region, which inserts into cardiolipin-containing membrane, promotes GTP hydrolysis and the helical assembly of a flexible OPA1 lattice on the membrane, which drives membrane curvature and mitochondrial fusion. Plays a role in the maintenance and remodeling of mitochondrial cristae, some invaginations of the mitochondrial inner membrane that provide an increase in the surface area. Probably acts by forming helical filaments at the inside of inner membrane tubes with the shape and dimensions of crista junctions. The equilibrium between L-OPA1 and S-OPA1 influences cristae shape and morphology: increased L-OPA1 levels promote cristae stacking and elongated mitochondria, while increased S-OPA1 levels correlated with irregular cristae packing and round mitochondria shape. Functionally, constitutes the soluble short form (S-OPA1) generated by cleavage by OMA1, which plays a central role in mitochondrial inner membrane fusion and cristae morphology. The transmembrane long form (L-OPA1) and the S-OPA1 form higher-order helical assemblies that coordinate the fusion of mitochondrial inner membranes. Inner membrane-anchored L-OPA1 molecules initiate membrane remodeling by recruiting soluble S-OPA1 to rapidly polymerize into a flexible cylindrical scaffold encaging the mitochondrial inner membrane. Once at the membrane surface, the formation of S-OPA1 helices induce bilayer curvature. OPA1 dimerization through the paddle region, which inserts into cardiolipin-containing membrane, promotes GTP hydrolysis and the helical assembly of a flexible OPA1 lattice on the membrane, which drives membrane curvature and mitochondrial fusion. Excess levels of S-OPA1 produced by cleavage by OMA1 following stress conditions that induce loss of mitochondrial membrane potential, lead to an impaired equilibrium between L-OPA1 and S-OPA1, thereby inhibiting mitochondrial fusion. Involved in mitochondrial safeguard in response to transient mitochondrial membrane depolarization by mediating flickering: cleavage by OMA1 leads to excess production of S-OPA1, preventing mitochondrial hyperfusion. Plays a role in the maintenance and remodeling of mitochondrial cristae, some invaginations of the mitochondrial inner membrane that provide an increase in the surface area. Probably acts by forming helical filaments at the inside of inner membrane tubes with the shape and dimensions of crista junctions. The equilibrium between L-OPA1 and S-OPA1 influences cristae shape and morphology: increased L-OPA1 levels promote cristae stacking and elongated mitochondria, while increased S-OPA1 levels correlated with irregular cristae packing and round mitochondria shape. Isoforms that contain the alternative exon 4b are required for mitochondrial genome maintenance, possibly by anchoring the mitochondrial nucleoids to the inner mitochondrial membrane. The chain is Dynamin-like GTPase OPA1, mitochondrial from Mus musculus (Mouse).